A 517-amino-acid chain; its full sequence is Ascochitine biosynthesis cluster MFS transporter (517 aa).

The segment covering 1 to 12 (MSPDSRDPEAQR) has biased composition (basic and acidic residues). The tract at residues 1–45 (MSPDSRDPEAQRDVGLTKNTSSVNIPLESVKTDKTSNASPIMGPG) is disordered. The N-linked (GlcNAc...) asparagine glycan is linked to asparagine 19. 12 helical membrane passes run 75–95 (WVITWLLSFLNVWVTFSSTIF), 111–131 (VVMTLGVSLTVLGFAVGPLIW), 141–161 (LTPFYFGYAVFCIFQIPVGVA), 172–192 (FFIGFFGTSAMAVTPGVLADI), 204–224 (VYAAAAFIGPIFGPIVGGFVV), 232–252 (WTAWITLILASAFGLAALVFV), 308–328 (ILLLVTLYISLVYGVLYLFFV), 347–367 (ALPLLAVMLGTLAGCLTILFV), 390–410 (LMMVGSVSLPIGLFWFGWTSS), 421–441 (AGFPIGIGLALIWVQGLSFLI), 457–475 (LIRSAVGAAFPLFGAPMYH), and 485–505 (LLGFLSVAMIPIPVAFYYYGP).

The protein belongs to the major facilitator superfamily. CAR1 family.

The protein resides in the membrane. MFS transporter; part of the gene cluster that mediates the biosynthesis the mycotoxin ascochitine, an o-quinone methide that plays a possible protective role against other microbial competitors in nature and is considered to be important for pathogenicity of legume-associated Didymella species. This Didymella fabae (Leaf and pod spot disease fungus) protein is Ascochitine biosynthesis cluster MFS transporter.